The sequence spans 1378 residues: S-cell enriched with leucine-rich repeat-containing protein slrA (1378 aa).

A helical transmembrane segment spans residues 17–37 (IFKILYCYLFTSLLLILSTWV). Residues N59, N112, N143, N172, and N201 are each glycosylated (N-linked (GlcNAc...) asparagine). LRR repeat units lie at residues 143-165 (NLTG…LPYL), 167-188 (HLRN…GLLK), 191-212 (SLVA…ADSK), 213-235 (AISY…WKTP), 236-257 (NLLF…EFFR), 260-281 (SLDY…LSKS), 282-304 (RISY…TCWK), 307-329 (SLRI…IFDH), and 331-353 (PLQY…LDCA). 3 N-linked (GlcNAc...) asparagine glycosylation sites follow: N265, N287, and N296. Residues N416, N436, N451, N491, N513, N596, N605, N634, N704, N710, N740, N741, N771, N788, N801, N826, N843, N861, N875, and N907 are each glycosylated (N-linked (GlcNAc...) asparagine). Residues 886-946 (SLNNNNNNNN…NNNENNNENK (61 aa)) are a coiled coil. The span at 891–909 (NNNNNNNNNKNNNNNNNDS) shows a compositional bias: low complexity. The segment at 891-945 (NNNNNNNNNKNNNNNNNDSNNEKEVVEDEEEDLDYSSQNDNNNINNNNNENNNEN) is disordered. Acidic residues predominate over residues 915-924 (VVEDEEEDLD). A compositionally biased stretch (low complexity) spans 929–945 (NDNNNINNNNNENNNEN). N-linked (GlcNAc...) asparagine glycosylation is found at N953, N970, N1090, and N1100. The helical transmembrane segment at 1160-1180 (YYIVFFGCASGLILVLVICIV) threads the bilayer. Residues 1227-1276 (DLNNNNNNNNNNNNNNNNNNNNNNNNNNNNNNNNNFNDGSDTFNNNNKKN) show a composition bias toward low complexity. A disordered region spans residues 1227–1378 (DLNNNNNNNN…KKHLTIINKK (152 aa)). Residues 1289–1304 (DGKENDIKNINNKKDE) are compositionally biased toward basic and acidic residues. The span at 1305–1324 (KEDDGDDDDDEDDDEYEDDT) shows a compositional bias: acidic residues. The span at 1328-1353 (SSGNSSRSKGSDGGSSSNSLSSDKQS) shows a compositional bias: low complexity. 2 N-linked (GlcNAc...) asparagine glycosylation sites follow: N1331 and N1360. A compositionally biased stretch (polar residues) spans 1354–1364 (FNNGNENNSII). The span at 1368–1378 (KKKHLTIINKK) shows a compositional bias: basic residues.

The protein resides in the membrane. The protein is S-cell enriched with leucine-rich repeat-containing protein slrA (slrA) of Dictyostelium discoideum (Social amoeba).